A 55-amino-acid polypeptide reads, in one-letter code: Large ribosomal subunit protein bL33 (55 aa).

It belongs to the bacterial ribosomal protein bL33 family.

The protein is Large ribosomal subunit protein bL33 of Rhodopseudomonas palustris (strain HaA2).